We begin with the raw amino-acid sequence, 72 residues long: Translation initiation factor IF-1 (72 aa).

The region spanning Met-1–Lys-72 is the S1-like domain.

This sequence belongs to the IF-1 family. Component of the 30S ribosomal translation pre-initiation complex which assembles on the 30S ribosome in the order IF-2 and IF-3, IF-1 and N-formylmethionyl-tRNA(fMet); mRNA recruitment can occur at any time during PIC assembly.

The protein localises to the cytoplasm. Functionally, one of the essential components for the initiation of protein synthesis. Stabilizes the binding of IF-2 and IF-3 on the 30S subunit to which N-formylmethionyl-tRNA(fMet) subsequently binds. Helps modulate mRNA selection, yielding the 30S pre-initiation complex (PIC). Upon addition of the 50S ribosomal subunit IF-1, IF-2 and IF-3 are released leaving the mature 70S translation initiation complex. The sequence is that of Translation initiation factor IF-1 from Methylibium petroleiphilum (strain ATCC BAA-1232 / LMG 22953 / PM1).